The following is a 469-amino-acid chain: 3-isopropylmalate dehydratase large subunit (469 aa).

Cys-347, Cys-410, and Cys-413 together coordinate [4Fe-4S] cluster.

This sequence belongs to the aconitase/IPM isomerase family. LeuC type 1 subfamily. Heterodimer of LeuC and LeuD. It depends on [4Fe-4S] cluster as a cofactor.

The enzyme catalyses (2R,3S)-3-isopropylmalate = (2S)-2-isopropylmalate. It functions in the pathway amino-acid biosynthesis; L-leucine biosynthesis; L-leucine from 3-methyl-2-oxobutanoate: step 2/4. Functionally, catalyzes the isomerization between 2-isopropylmalate and 3-isopropylmalate, via the formation of 2-isopropylmaleate. In Burkholderia thailandensis (strain ATCC 700388 / DSM 13276 / CCUG 48851 / CIP 106301 / E264), this protein is 3-isopropylmalate dehydratase large subunit.